A 196-amino-acid chain; its full sequence is MKEKIPFYNEKEFHDMVKKTKKGTFSGWYIIDKDNNSVEFSGKFNRQFKLNKPVIPVNTEYVTRKEFNEYKNSNDQRLTKIETTLAAQGEQINKLTQTVEKQGEQINQLVQVVLLHGEQINKLTQTVEKQGEQIKELQIEQKAQGETLKLILQTLQKMSDRLDKMEVKMDKMEVKMDKMEVKMDKMEKRIDKLESK.

It belongs to the UPF0134 family.

This is UPF0134 protein MPN_501 from Mycoplasma pneumoniae (strain ATCC 29342 / M129 / Subtype 1) (Mycoplasmoides pneumoniae).